The following is a 360-amino-acid chain: Photosystem II protein D1 (360 aa).

A run of 3 helical transmembrane segments spans residues 29–46 (YIGWFGCLMIPTLLTAAS), 118–133 (HFLIGVACWMGREWEL), and 142–156 (WIFVAFSAPVAAASA). His-118 contributes to the chlorophyll a binding site. Residue Trp-126 coordinates pheophytin a. [CaMn4O5] cluster-binding residues include Asp-170 and Glu-189. Residues 197-218 (FHMAGVAGVFGGSLFSAMHGSL) form a helical membrane-spanning segment. His-198 lines the chlorophyll a pocket. A quinone-binding positions include His-215 and 264 to 265 (SF). A Fe cation-binding site is contributed by His-215. Fe cation is bound at residue His-272. Residues 274–288 (FLAAWPVVGIWLTAL) form a helical membrane-spanning segment. [CaMn4O5] cluster is bound by residues His-332, Glu-333, Asp-342, and Ala-344. Residues 345 to 360 (SNEILPVAISAPSVVG) constitute a propeptide that is removed on maturation.

Belongs to the reaction center PufL/M/PsbA/D family. As to quaternary structure, PSII is composed of 1 copy each of membrane proteins PsbA, PsbB, PsbC, PsbD, PsbE, PsbF, PsbH, PsbI, PsbJ, PsbK, PsbL, PsbM, PsbT, PsbX, PsbY, PsbZ, Psb30/Ycf12, at least 3 peripheral proteins of the oxygen-evolving complex and a large number of cofactors. It forms dimeric complexes. The cofactor is The D1/D2 heterodimer binds P680, chlorophylls that are the primary electron donor of PSII, and subsequent electron acceptors. It shares a non-heme iron and each subunit binds pheophytin, quinone, additional chlorophylls, carotenoids and lipids. D1 provides most of the ligands for the Mn4-Ca-O5 cluster of the oxygen-evolving complex (OEC). There is also a Cl(-1) ion associated with D1 and D2, which is required for oxygen evolution. The PSII complex binds additional chlorophylls, carotenoids and specific lipids.. Tyr-161 forms a radical intermediate that is referred to as redox-active TyrZ, YZ or Y-Z. In terms of processing, C-terminally processed by CTPA; processing is essential to allow assembly of the oxygen-evolving complex and thus photosynthetic growth.

It localises to the plastid. The protein resides in the chloroplast thylakoid membrane. The enzyme catalyses 2 a plastoquinone + 4 hnu + 2 H2O = 2 a plastoquinol + O2. In terms of biological role, photosystem II (PSII) is a light-driven water:plastoquinone oxidoreductase that uses light energy to abstract electrons from H(2)O, generating O(2) and a proton gradient subsequently used for ATP formation. It consists of a core antenna complex that captures photons, and an electron transfer chain that converts photonic excitation into a charge separation. The D1/D2 (PsbA/PsbD) reaction center heterodimer binds P680, the primary electron donor of PSII as well as several subsequent electron acceptors. The protein is Photosystem II protein D1 of Ectocarpus siliculosus (Brown alga).